Here is a 138-residue protein sequence, read N- to C-terminus: uncharacterized protein (138 aa).

The next 3 helical transmembrane spans lie at 17–37, 43–63, and 117–137; these read IVVSVFYLILFFLILNITIYF, FTVVVKNSVLTSFFVNLLLVC, and FWWMNLIVYLVGSLVSGLVSL.

The protein resides in the cell membrane. This is an uncharacterized protein from Mycoplasma genitalium (strain ATCC 33530 / DSM 19775 / NCTC 10195 / G37) (Mycoplasmoides genitalium).